The following is a 367-amino-acid chain: tRNA-specific 2-thiouridylase MnmA (367 aa).

Residues 13–20 (GLSGGVDS) and Met-39 each bind ATP. Positions 99–101 (NPD) are interaction with target base in tRNA. Cys-104 (nucleophile) is an active-site residue. Residues Cys-104 and Cys-200 are joined by a disulfide bond. An ATP-binding site is contributed by Gly-128. Positions 150 to 152 (KDQ) are interaction with tRNA. Catalysis depends on Cys-200, which acts as the Cysteine persulfide intermediate. The segment at 307–308 (RY) is interaction with tRNA.

Belongs to the MnmA/TRMU family.

It localises to the cytoplasm. It carries out the reaction S-sulfanyl-L-cysteinyl-[protein] + uridine(34) in tRNA + AH2 + ATP = 2-thiouridine(34) in tRNA + L-cysteinyl-[protein] + A + AMP + diphosphate + H(+). Functionally, catalyzes the 2-thiolation of uridine at the wobble position (U34) of tRNA, leading to the formation of s(2)U34. The chain is tRNA-specific 2-thiouridylase MnmA from Neisseria meningitidis serogroup C / serotype 2a (strain ATCC 700532 / DSM 15464 / FAM18).